The following is a 374-amino-acid chain: uncharacterized protein (374 aa).

The disordered stretch occupies residues 182–201 (PALGESPQGQKSSASSDKAV). Polar residues predominate over residues 188 to 197 (PQGQKSSASS).

This is an uncharacterized protein from Rattus norvegicus (Rat).